A 669-amino-acid polypeptide reads, in one-letter code: Phosphatidylinositol-3-phosphate phosphatase MTMR1 (669 aa).

Met-1 carries the N-acetylmethionine modification. Over residues Met-1 to Glu-17 the composition is skewed to low complexity. The tract at residues Met-1–Thr-55 is disordered. A phosphoserine mark is found at Ser-47 and Ser-53. One can recognise a GRAM domain in the interval Asn-94–Gly-165. The 376-residue stretch at Gly-230–Tyr-605 folds into the Myotubularin phosphatase domain. Residues Asn-355, Asn-380, and Ile-381 each contribute to the a 1,2-diacyl-sn-glycero-3-phospho-(1D-myo-inositol-3-phosphate) site. Cys-442 serves as the catalytic Phosphocysteine intermediate. A 1,2-diacyl-sn-glycero-3-phospho-(1D-myo-inositol-3-phosphate)-binding residues include Ser-443, Asp-444, Gly-445, Trp-446, Asp-447, Arg-448, and Arg-488. Ser-443 contributes to the phosphate binding site. Residues Gly-445, Trp-446, Asp-447, and Arg-448 each contribute to the phosphate site. Residues Met-612–Val-669 are required for dimerization. Positions Ala-644–Val-669 are disordered. Residues Ser-649–Ser-661 show a composition bias toward low complexity.

Belongs to the protein-tyrosine phosphatase family. Non-receptor class myotubularin subfamily. As to quaternary structure, homodimer. As to expression, widely expressed. Detected in skeletal muscle, heart, lung, liver and brain.

The protein resides in the cell membrane. It is found in the cytoplasm. The catalysed reaction is a 1,2-diacyl-sn-glycero-3-phospho-(1D-myo-inositol-3-phosphate) + H2O = a 1,2-diacyl-sn-glycero-3-phospho-(1D-myo-inositol) + phosphate. The enzyme catalyses 1,2-dioctanoyl-sn-glycero-3-phospho-(1-D-myo-inositol-3-phosphate) + H2O = 1,2-dioctanoyl-sn-glycero-3-phospho-(1D-myo-inositol) + phosphate. It catalyses the reaction a 1,2-diacyl-sn-glycero-3-phospho-(1D-myo-inositol-3,5-bisphosphate) + H2O = a 1,2-diacyl-sn-glycero-3-phospho-(1D-myo-inositol-5-phosphate) + phosphate. Lipid phosphatase that specifically dephosphorylates the D-3 position of phosphatidylinositol 3-phosphate, generating phosphatidylinositol. Could also dephosphorylate phosphatidylinositol 3,5-bisphosphate to produce phosphatidylinositol 5-phosphate. This Mus musculus (Mouse) protein is Phosphatidylinositol-3-phosphate phosphatase MTMR1.